A 178-amino-acid chain; its full sequence is Caveolin-1 (178 aa).

S2 is subject to N-acetylserine. A Phosphoserine modification is found at S2. The segment at 2-94 is required for homooligomerization; that stretch reads SGGKYVDSEG…WKASFTTFTV (93 aa). The Cytoplasmic segment spans residues 2-104; the sequence is SGGKYVDSEG…TKYWFYRLLS (103 aa). K5 carries the post-translational modification N6-acetyllysine; alternate. K5 is covalently cross-linked (Glycyl lysine isopeptide (Lys-Gly) (interchain with G-Cter in ubiquitin); alternate). The residue at position 6 (Y6) is a Phosphotyrosine. The residue at position 9 (S9) is a Phosphoserine. Y14 carries the phosphotyrosine; by ABL1 modification. At Y25 the chain carries Phosphotyrosine. Residues K26, K30, K39, K47, and K57 each participate in a glycyl lysine isopeptide (Lys-Gly) (interchain with G-Cter in ubiquitin) cross-link. The interaction with CAVIN3 stretch occupies residues 82-94; it reads DGIWKASFTTFTV. The segment at residues 105 to 125 is an intramembrane region (helical); the sequence is SLVGIPVALIWGIYFAILSFL. Residues 126–178 are Cytoplasmic-facing; the sequence is YIWAVVPCIKSFLIKIQCISRIYSICIHTFCDPLYEAIGKIFSNIRISMQKEI. The interacts with SPRY1, SPRY2, SPRY3 and SPRY4 stretch occupies residues 131–142; the sequence is VPCIKSFLIKIQ. 3 S-palmitoyl cysteine lipidation sites follow: C133, C143, and C156. Residues 149–160 form an interacts with SPRY1, SPRY2, and SPRY4 region; sequence SICIHTFCDPLY. The interacts with SPRY1, SPRY2, SPRY3 and SPRY4 stretch occupies residues 167–178; that stretch reads FSNIRISMQKEI.

This sequence belongs to the caveolin family. Homooligomer. Interacts with GLIPR2. Interacts with NOSTRIN. Interacts with SNAP25 and STX1A. Interacts (via the N-terminus) with DPP4; the interaction is direct. Interacts with CTNNB1, CDH1 and JUP. Interacts with PACSIN2; this interaction induces membrane tubulation. Interacts with SLC7A9. Interacts with BMX and BTK. Interacts with TGFBR1. Interacts with CAVIN3 (via leucine-zipper domain) in a cholesterol-sensitive manner. Interacts with CAVIN1. Interacts with EHD2 in a cholesterol-dependent manner. Forms a ternary complex with UBXN6 and VCP; mediates CAV1 targeting to lysosomes for degradation. Interacts with ABCG1; this interaction regulates ABCG1-mediated cholesterol efflux. Interacts with NEU3; this interaction enhances NEU3 sialidase activity within caveola. Interacts (via C-terminus) with SPRY1, SPRY2 (via C-terminus), SPRY3, and SPRY4. Interacts with IGFBP5; this interaction allows trafficking of IGFBP5 from the plasma membrane to the nucleus. Post-translationally, phosphorylated at Tyr-14 by ABL1 in response to oxidative stress. Ubiquitinated. Undergo monoubiquitination and multi- and/or polyubiquitination. Monoubiquitination of N-terminal lysines promotes integration in a ternary complex with UBXN6 and VCP which promotes oligomeric CAV1 targeting to lysosomes for degradation. Ubiquitinated by ZNRF1; leading to degradation and modulation of the TLR4-mediated immune response.

It localises to the golgi apparatus membrane. Its subcellular location is the cell membrane. The protein localises to the membrane. It is found in the caveola. The protein resides in the membrane raft. Its function is as follows. May act as a scaffolding protein within caveolar membranes. Forms a stable heterooligomeric complex with CAV2 that targets to lipid rafts and drives caveolae formation. Mediates the recruitment of CAVIN proteins (CAVIN1/2/3/4) to the caveolae. Interacts directly with G-protein alpha subunits and can functionally regulate their activity. Involved in the costimulatory signal essential for T-cell receptor (TCR)-mediated T-cell activation. Its binding to DPP4 induces T-cell proliferation and NF-kappa-B activation in a T-cell receptor/CD3-dependent manner. Recruits CTNNB1 to caveolar membranes and may regulate CTNNB1-mediated signaling through the Wnt pathway. Negatively regulates TGFB1-mediated activation of SMAD2/3 by mediating the internalization of TGFBR1 from membrane rafts leading to its subsequent degradation. Binds 20(S)-hydroxycholesterol (20(S)-OHC). The sequence is that of Caveolin-1 (CAV1) from Atelerix albiventris (Middle-African hedgehog).